We begin with the raw amino-acid sequence, 256 residues long: Transmembrane protein 187 (256 aa).

Helical transmembrane passes span 8-28 (ALFHVALASCLCVATVHTGIF), 51-71 (FLAMPFNSLVNMAYVFLGVYW), 94-112 (VFAGMALVYGPVQWLRIGM), 119-139 (VLDQWLTLPIFAWPVAWCLCL), 146-168 (WLFLAVEGLSLCSYSLALLHPHG), 193-213 (NISSGTYLALGVLSCLGFVVL), and 233-253 (FWSKVCDVLQFHFAFLFLTSL).

It is found in the membrane. The chain is Transmembrane protein 187 (TMEM187) from Bos taurus (Bovine).